A 356-amino-acid chain; its full sequence is S-adenosylmethionine:tRNA ribosyltransferase-isomerase (356 aa).

The protein belongs to the QueA family. In terms of assembly, monomer.

The protein localises to the cytoplasm. The catalysed reaction is 7-aminomethyl-7-carbaguanosine(34) in tRNA + S-adenosyl-L-methionine = epoxyqueuosine(34) in tRNA + adenine + L-methionine + 2 H(+). Its pathway is tRNA modification; tRNA-queuosine biosynthesis. Transfers and isomerizes the ribose moiety from AdoMet to the 7-aminomethyl group of 7-deazaguanine (preQ1-tRNA) to give epoxyqueuosine (oQ-tRNA). The sequence is that of S-adenosylmethionine:tRNA ribosyltransferase-isomerase from Histophilus somni (strain 2336) (Haemophilus somnus).